We begin with the raw amino-acid sequence, 223 residues long: GrpE protein homolog, mitochondrial (223 aa).

Belongs to the GrpE family. Component of the PAM complex, at least composed of mtHsp70, mge1, tim44, pam16, pam17 and pam18.

It localises to the mitochondrion matrix. Essential component of the PAM complex, a complex required for the translocation of transit peptide-containing proteins from the inner membrane into the mitochondrial matrix in an ATP-dependent manner. Seems to control the nucleotide-dependent binding of ssc1 to substrate proteins. In Schizosaccharomyces pombe (strain 972 / ATCC 24843) (Fission yeast), this protein is GrpE protein homolog, mitochondrial (mge1).